Consider the following 130-residue polypeptide: Small ribosomal subunit protein uS11 (130 aa).

Residues 111-130 (IRDVTPVPHNGSRPPKRRRA) are disordered.

It belongs to the universal ribosomal protein uS11 family. As to quaternary structure, part of the 30S ribosomal subunit. Interacts with proteins S7 and S18. Binds to IF-3.

In terms of biological role, located on the platform of the 30S subunit, it bridges several disparate RNA helices of the 16S rRNA. Forms part of the Shine-Dalgarno cleft in the 70S ribosome. This is Small ribosomal subunit protein uS11 from Lactobacillus acidophilus (strain ATCC 700396 / NCK56 / N2 / NCFM).